Consider the following 314-residue polypeptide: Ribosomal protein L11 methyltransferase (314 aa).

S-adenosyl-L-methionine contacts are provided by Thr-163, Gly-184, Asp-206, and Asn-248.

It belongs to the methyltransferase superfamily. PrmA family.

The protein localises to the cytoplasm. The catalysed reaction is L-lysyl-[protein] + 3 S-adenosyl-L-methionine = N(6),N(6),N(6)-trimethyl-L-lysyl-[protein] + 3 S-adenosyl-L-homocysteine + 3 H(+). Its function is as follows. Methylates ribosomal protein L11. In Lactobacillus delbrueckii subsp. bulgaricus (strain ATCC 11842 / DSM 20081 / BCRC 10696 / JCM 1002 / NBRC 13953 / NCIMB 11778 / NCTC 12712 / WDCM 00102 / Lb 14), this protein is Ribosomal protein L11 methyltransferase.